We begin with the raw amino-acid sequence, 535 residues long: MKTKFIFITGGVVSSIGKGLAAASLGALLESRGLRVTMQKLDPYINVDPGTMSPFQHGEVFVTDDGAETDLDLGHYERYTSARLSKKSNFTTGQVYFSVIDKERRGDYLGGTVQVIPHITDEIKSKIIENAKGADVAIVEVGGTVGDIESLPFLEAIRQFRFDRGAGNTLYVHVTLVPYIRTAGEMKTKPTQHSVMELRKIGIQPDILLCRCDRELPQDMKKKISLFCNVEESCVIPSVDSEHIYAVPLALNKERLDEQVVEKLNIWTKQPDLTPWQDVVETLRHPSHGEVRIAIVGKYVNLTESYKSLAEALTHGGIANDCRVYLKYVDAEKIEENGVEGWLDDVDGVLVPGGFGERGTEGKVLAIEYARTRQIPFFGICLGMQMAAIEFARNVCGLAKACSTEFKNDCKEPVIHLMEEQKSVNKKGGTMRLGACPCTVTKGTKAFDAYNEADISERHRHRYEFNNTYRELMTTKGLVLSGINQQKDLVEIIELPDHPWFLACQFHPEFKSKPLVPHPLFRAFIGASLTHRNQR.

An amidoligase domain region spans residues Met-1–Ile-266. Residue Ser-14 participates in CTP binding. Ser-14 serves as a coordination point for UTP. ATP contacts are provided by residues Ser-15 to Leu-20 and Asp-72. Mg(2+) is bound by residues Asp-72 and Glu-140. CTP is bound by residues Asp-147–Glu-149, Lys-187–Gln-192, and Lys-223. Residues Lys-187 to Gln-192 and Lys-223 each bind UTP. A Glutamine amidotransferase type-1 domain is found at Arg-292–Gln-534. Gly-354 is a binding site for L-glutamine. The Nucleophile; for glutamine hydrolysis role is filled by Cys-381. L-glutamine contacts are provided by residues Leu-382–Gln-385, Glu-405, and Arg-462. Catalysis depends on residues His-507 and Glu-509.

It belongs to the CTP synthase family. As to quaternary structure, homotetramer.

The enzyme catalyses UTP + L-glutamine + ATP + H2O = CTP + L-glutamate + ADP + phosphate + 2 H(+). The catalysed reaction is L-glutamine + H2O = L-glutamate + NH4(+). It carries out the reaction UTP + NH4(+) + ATP = CTP + ADP + phosphate + 2 H(+). The protein operates within pyrimidine metabolism; CTP biosynthesis via de novo pathway; CTP from UDP: step 2/2. Its activity is regulated as follows. Allosterically activated by GTP, when glutamine is the substrate; GTP has no effect on the reaction when ammonia is the substrate. The allosteric effector GTP functions by stabilizing the protein conformation that binds the tetrahedral intermediate(s) formed during glutamine hydrolysis. Inhibited by the product CTP, via allosteric rather than competitive inhibition. Catalyzes the ATP-dependent amination of UTP to CTP with either L-glutamine or ammonia as the source of nitrogen. Regulates intracellular CTP levels through interactions with the four ribonucleotide triphosphates. The polypeptide is CTP synthase (Trichlorobacter lovleyi (strain ATCC BAA-1151 / DSM 17278 / SZ) (Geobacter lovleyi)).